The sequence spans 146 residues: Protein archease (146 aa).

Residues Asp16, Asp145, and Ile146 each coordinate Ca(2+).

It belongs to the archease family.

In terms of biological role, activates the tRNA-splicing ligase complex by facilitating the enzymatic turnover of catalytic subunit RtcB. Acts by promoting the guanylylation of RtcB, a key intermediate step in tRNA ligation. Can also alter the NTP specificity of RtcB such that ATP, dGTP or ITP is used efficiently. The protein is Protein archease of Methanosarcina barkeri (strain Fusaro / DSM 804).